An 84-amino-acid chain; its full sequence is MATTKAGGSTKNGRDSHSKRLGAKLYDGQFAKAGAIIYRQRGTRVFPGVNVQRSGDDTLFSLADGYVKYENKRNRKYVSVYPAK.

Polar residues predominate over residues 1–11; the sequence is MATTKAGGSTK. The tract at residues 1–20 is disordered; sequence MATTKAGGSTKNGRDSHSKR.

This sequence belongs to the bacterial ribosomal protein bL27 family.

The polypeptide is Large ribosomal subunit protein bL27 (Mycoplasmopsis synoviae (strain 53) (Mycoplasma synoviae)).